We begin with the raw amino-acid sequence, 1445 residues long: DNA-directed RNA polymerase subunit beta'' (1445 aa).

Positions 220, 293, 300, and 303 each coordinate Zn(2+).

This sequence belongs to the RNA polymerase beta' chain family. RpoC2 subfamily. In terms of assembly, in plastids the minimal PEP RNA polymerase catalytic core is composed of four subunits: alpha, beta, beta', and beta''. When a (nuclear-encoded) sigma factor is associated with the core the holoenzyme is formed, which can initiate transcription. Requires Zn(2+) as cofactor.

The protein resides in the plastid. The protein localises to the chloroplast. The catalysed reaction is RNA(n) + a ribonucleoside 5'-triphosphate = RNA(n+1) + diphosphate. DNA-dependent RNA polymerase catalyzes the transcription of DNA into RNA using the four ribonucleoside triphosphates as substrates. The protein is DNA-directed RNA polymerase subunit beta'' of Anthoceros angustus (Hornwort).